The primary structure comprises 383 residues: MRRTFTAEEKASVFELWKNGTGFSEIANILGSKPGTIFTMLRDTGGIKPHERKRAVAHLTLSEREEIRAGLSAKMSIRAIATALNRSPSTISREVQRNRGRRYYKAVDANNRANRMAKRPKPCLLDQNLPLRKLVLEKLEMKWSPEQISGWLRRTKPRQKTLRISPETIYKTLYFRSREALHHLNIQHLRRSHSLRHGRRHTRKGERGTINIVNGTPIHERSRNIDNRRSLGHWEGDLVSGTKNSHIATLVDRKSRYTIILRLRGKDSVSVNQALTDKFLSLPSELRKSLTWDRGMELARHLEFTVSTGVKVYFCDPQSPWQRGTNENTNGLIRQYFPKKTCLAQYTQHELDLVAAQLNNRPRKTLKFKTPKEIIERGVALTD.

One can recognise an Integrase catalytic domain in the interval 213–379 (VNGTPIHERS…TPKEIIERGV (167 aa)).

Belongs to the transposase IS30 family.

Its function is as follows. Required for the transposition of the insertion element. The protein is Transposase InsI for insertion sequence element IS30C (insI3) of Escherichia coli (strain K12).